Consider the following 544-residue polypeptide: Membrane protein insertase YidC (544 aa).

The chain crosses the membrane as a helical span at residues 4–24 (KALLALVLSAAVLLIYQIFIY). The tract at residues 44–78 (NPAAPVSPQTPADEPSSGSAANPETAAALPVDGTE) is disordered. Helical transmembrane passes span 363 to 383 (NYGI…WPLG), 434 to 454 (LPMI…LYAI), and 508 to 528 (PVIF…YWLF).

It belongs to the OXA1/ALB3/YidC family. Type 1 subfamily. Interacts with the Sec translocase complex via SecD. Specifically interacts with transmembrane segments of nascent integral membrane proteins during membrane integration.

It is found in the cell inner membrane. In terms of biological role, required for the insertion and/or proper folding and/or complex formation of integral membrane proteins into the membrane. Involved in integration of membrane proteins that insert both dependently and independently of the Sec translocase complex, as well as at least some lipoproteins. Aids folding of multispanning membrane proteins. This chain is Membrane protein insertase YidC, found in Syntrophus aciditrophicus (strain SB).